The chain runs to 566 residues: Protein kintoun (566 aa).

Disordered stretches follow at residues 183–298 (KYKG…TAPQ), 399–467 (EEEE…AETG), and 493–552 (QLEE…ESRI). Residues 208–290 (PQQTTGPQQP…HQPTDPQQTT (83 aa)) show a composition bias toward low complexity. The span at 399–424 (EEEERRAEEEESRKGGDEDGELHPDC) shows a compositional bias: basic and acidic residues. Residues 440 to 467 (TPAADTHTPAADTHTPAADTHTPAAETG) show a composition bias toward low complexity. The span at 535–550 (DPAHTDPAHTDPEMES) shows a compositional bias: basic and acidic residues.

This sequence belongs to the PIH1 family. Kintoun subfamily.

It is found in the cytoplasm. The protein resides in the dynein axonemal particle. Required for cytoplasmic pre-assembly of axonemal dyneins, thereby playing a central role in motility in cilia and flagella. Involved in pre-assembly of dynein arm complexes in the cytoplasm before intraflagellar transport loads them for the ciliary compartment. This chain is Protein kintoun, found in Danio rerio (Zebrafish).